Consider the following 220-residue polypeptide: Chaperone protein TorD (220 aa).

This sequence belongs to the TorD/DmsD family. TorD subfamily.

Its subcellular location is the cytoplasm. Its function is as follows. Involved in the biogenesis of TorA. Acts on TorA before the insertion of the molybdenum cofactor and, as a result, probably favors a conformation of the apoenzyme that is competent for acquiring the cofactor. The protein is Chaperone protein TorD of Vibrio cholerae serotype O1 (strain ATCC 39315 / El Tor Inaba N16961).